The primary structure comprises 104 residues: Flagellar hook-basal body complex protein FliE (104 aa).

It belongs to the FliE family.

It is found in the bacterial flagellum basal body. This chain is Flagellar hook-basal body complex protein FliE, found in Salmonella heidelberg (strain SL476).